The chain runs to 408 residues: RNA exonuclease 4 (408 aa).

Positions 27–70 (TKEKDVSNSKAHNSRSSQSPSSSLRSSSRIQRKSKHSQGVGQYM) are disordered. Residues 40 to 55 (SRSSQSPSSSLRSSSR) show a composition bias toward low complexity. The Exonuclease domain occupies 131–292 (QYLAIDCEMV…YRLHKKEWER (162 aa)). Basic and acidic residues predominate over residues 310–322 (PEHVLGKRGHDEK). The interval 310-408 (PEHVLGKRGH…GESWWEQPAA (99 aa)) is disordered. Positions 343–357 (GNGGGRQQFPGGGRK) are enriched in gly residues. Basic and acidic residues predominate over residues 372 to 384 (QRVDENGRGDGTS).

Belongs to the REXO4 family.

Its subcellular location is the nucleus. Its function is as follows. Exoribonuclease involved in ribosome biosynthesis. Involved in the processing of ITS1, the internal transcribed spacer localized between the 18S and 5.8S rRNAs. This Cryptococcus neoformans var. neoformans serotype D (strain B-3501A) (Filobasidiella neoformans) protein is RNA exonuclease 4 (REX4).